A 382-amino-acid polypeptide reads, in one-letter code: Type 2 DNA topoisomerase 6 subunit A (382 aa).

Residues 14–155 (YDPQKVLKKL…MHITADRRGY (142 aa)) form the Topo IIA-type catalytic domain. The O-(5'-phospho-DNA)-tyrosine intermediate role is filled by Tyr108. Mg(2+) is bound by residues Glu202 and Asp254.

Belongs to the TOP6A family. As to quaternary structure, homodimer. Heterotetramer of two Top6A and two Top6B chains. Mg(2+) is required as a cofactor.

The catalysed reaction is ATP-dependent breakage, passage and rejoining of double-stranded DNA.. In terms of biological role, relaxes both positive and negative superturns and exhibits a strong decatenase activity. The protein is Type 2 DNA topoisomerase 6 subunit A of Pyrococcus horikoshii (strain ATCC 700860 / DSM 12428 / JCM 9974 / NBRC 100139 / OT-3).